The chain runs to 133 residues: Thioredoxin-like protein CXXS1 (133 aa).

Positions 1–120 (MEIQQQKGVG…VKKMVDASAE (120 aa)) constitute a Thioredoxin domain.

The protein belongs to the thioredoxin family.

In Oryza sativa subsp. japonica (Rice), this protein is Thioredoxin-like protein CXXS1.